Here is a 292-residue protein sequence, read N- to C-terminus: UTP--glucose-1-phosphate uridylyltransferase (292 aa).

It belongs to the UDPGP type 2 family. Interacts with FloT.

It is found in the cell membrane. Its subcellular location is the membrane raft. It catalyses the reaction alpha-D-glucose 1-phosphate + UTP + H(+) = UDP-alpha-D-glucose + diphosphate. It participates in glycolipid metabolism; diglucosyl-diacylglycerol biosynthesis. In terms of biological role, catalyzes the formation of UDP-glucose from glucose-1-phosphate and UTP. This is an intermediate step in the biosynthesis of diglucosyl-diacylglycerol (Glc2-DAG), i.e. the predominant glycolipid found in B.subtilis membrane, which is also used as a membrane anchor for lipoteichoic acid (LTA). Has a role in the biosynthesis of all phosphate-containing envelope polymers, since UDP-glucose serves as a glucosyl donor not only for the biosynthesis of LTA but also for wall teichoic acids (WTAs). Is required for biofilm formation. This is likely due to another role of UDP-glucose, which might also act as a metabolic signal regulating biofilm formation or may be involved in some unknown biosynthetic pathway essential for biofilm formation, e.g. the synthesis of an exopolysaccharide. The polypeptide is UTP--glucose-1-phosphate uridylyltransferase (gtaB) (Bacillus subtilis (strain 168)).